The chain runs to 545 residues: Chaperonin GroEL (545 aa).

Residues 30–33 (TLGP), Lys-51, 87–91 (DGTTT), Gly-415, and Asp-495 contribute to the ATP site.

This sequence belongs to the chaperonin (HSP60) family. Forms a cylinder of 14 subunits composed of two heptameric rings stacked back-to-back. Interacts with the co-chaperonin GroES.

It is found in the cytoplasm. The enzyme catalyses ATP + H2O + a folded polypeptide = ADP + phosphate + an unfolded polypeptide.. Its function is as follows. Together with its co-chaperonin GroES, plays an essential role in assisting protein folding. The GroEL-GroES system forms a nano-cage that allows encapsulation of the non-native substrate proteins and provides a physical environment optimized to promote and accelerate protein folding. The protein is Chaperonin GroEL of Shewanella denitrificans (strain OS217 / ATCC BAA-1090 / DSM 15013).